A 279-amino-acid chain; its full sequence is Pantothenate synthetase (279 aa).

27–34 is a binding site for ATP; that stretch reads MGYLHEGH. H34 (proton donor) is an active-site residue. Residue Q58 participates in (R)-pantoate binding. Q58 is a binding site for beta-alanine. 144-147 lines the ATP pocket; sequence GKKD. (R)-pantoate is bound at residue Q150. ATP contacts are provided by residues V173 and 181 to 184; that span reads MSSR.

The protein belongs to the pantothenate synthetase family. In terms of assembly, homodimer.

The protein resides in the cytoplasm. The enzyme catalyses (R)-pantoate + beta-alanine + ATP = (R)-pantothenate + AMP + diphosphate + H(+). The protein operates within cofactor biosynthesis; (R)-pantothenate biosynthesis; (R)-pantothenate from (R)-pantoate and beta-alanine: step 1/1. Its function is as follows. Catalyzes the condensation of pantoate with beta-alanine in an ATP-dependent reaction via a pantoyl-adenylate intermediate. The chain is Pantothenate synthetase from Geobacter sp. (strain M21).